Here is a 243-residue protein sequence, read N- to C-terminus: tRNA (guanine-N(1)-)-methyltransferase (243 aa).

Residues G112 and 131–136 (LGDYVL) each bind S-adenosyl-L-methionine.

The protein belongs to the RNA methyltransferase TrmD family. As to quaternary structure, homodimer.

The protein resides in the cytoplasm. The enzyme catalyses guanosine(37) in tRNA + S-adenosyl-L-methionine = N(1)-methylguanosine(37) in tRNA + S-adenosyl-L-homocysteine + H(+). Specifically methylates guanosine-37 in various tRNAs. The polypeptide is tRNA (guanine-N(1)-)-methyltransferase (Leuconostoc mesenteroides subsp. mesenteroides (strain ATCC 8293 / DSM 20343 / BCRC 11652 / CCM 1803 / JCM 6124 / NCDO 523 / NBRC 100496 / NCIMB 8023 / NCTC 12954 / NRRL B-1118 / 37Y)).